Reading from the N-terminus, the 477-residue chain is RNA pseudouridine synthase 4, mitochondrial (477 aa).

Residues 1 to 43 (MAKWRLATATLRRQLQSSSPTISTFKNPTKALSAAAHQSTRSY) constitute a mitochondrion transit peptide. Residues 34 to 55 (AAAHQSTRSYSTTQTDDSRGKW) form a disordered region. Residues 36–48 (AHQSTRSYSTTQT) show a composition bias toward polar residues. One can recognise an S4 RNA-binding domain in the interval 90 to 175 (TTALRWILRC…AKKESFQCSD (86 aa)). D236 is a catalytic residue.

Belongs to the pseudouridine synthase RluA family.

The protein localises to the mitochondrion. It catalyses the reaction a uridine in RNA = a pseudouridine in RNA. In Arabidopsis thaliana (Mouse-ear cress), this protein is RNA pseudouridine synthase 4, mitochondrial.